A 115-amino-acid chain; its full sequence is Large ribosomal subunit protein bL19 (115 aa).

Belongs to the bacterial ribosomal protein bL19 family.

Functionally, this protein is located at the 30S-50S ribosomal subunit interface and may play a role in the structure and function of the aminoacyl-tRNA binding site. This chain is Large ribosomal subunit protein bL19, found in Streptococcus pyogenes serotype M1.